Here is a 1377-residue protein sequence, read N- to C-terminus: Zinc finger MYM-type protein 2 (1377 aa).

Residues lysine 48, lysine 88, lysine 98, and lysine 104 each participate in a glycyl lysine isopeptide (Lys-Gly) (interchain with G-Cter in SUMO2) cross-link. 2 stretches are compositionally biased toward polar residues: residues 85-115 (TSSK…SVSE) and 127-138 (TNQGQEKNSSNF). The segment at 85–177 (TSSKNEELQG…GMGNSGITTE (93 aa)) is disordered. Residues 139-152 (IERRPPETKNRTND) are compositionally biased toward basic and acidic residues. Lysine 147 participates in a covalent cross-link: Glycyl lysine isopeptide (Lys-Gly) (interchain with G-Cter in SUMO2). Positions 153–164 (VDFSTSSFSRSK) are enriched in polar residues. At serine 159 the chain carries Phosphoserine. Residues lysine 253 and lysine 297 each participate in a glycyl lysine isopeptide (Lys-Gly) (interchain with G-Cter in SUMO2) cross-link. The tract at residues 273–305 (NGESATHHNPDSWISQSASFPRNQKQPGVDSLS) is disordered. The span at 284 to 298 (SWISQSASFPRNQKQ) shows a compositional bias: polar residues. Serine 305 carries the phosphoserine modification. Residues lysine 312, lysine 325, lysine 348, and lysine 366 each participate in a glycyl lysine isopeptide (Lys-Gly) (interchain with G-Cter in SUMO2) cross-link. Residues 327 to 363 (VKVTCANCKKPLQKGQTAYQRKGSAHLFCSTTCLSSF) form an MYM-type 1 zinc finger. The MYM-type 2 zinc finger occupies 369–409 (PKKLCVMCKKDITTMKGTIVAQVDSSESFQEFCSTSCLSLY). Glycyl lysine isopeptide (Lys-Gly) (interchain with G-Cter in SUMO2) cross-links involve residues lysine 417, lysine 441, lysine 491, lysine 503, lysine 513, lysine 529, and lysine 532. MYM-type zinc fingers lie at residues 421 to 456 (NKSR…FNRY) and 463 to 502 (IMNC…VSEY). The MYM-type 5 zinc finger occupies 533–570 (LTTCTGCRTQCRFFDMTQCIGPNGYMEPYCSTACMNSH). Glycyl lysine isopeptide (Lys-Gly) (interchain with G-Cter in SUMO2) cross-links involve residues lysine 576, lysine 603, lysine 649, lysine 658, lysine 688, lysine 700, and lysine 709. An MYM-type 6 zinc finger spans residues 636–671 (QLKCNYCKNSFCSKPEILEWENKVHQFCSKTCSDDY). 2 MYM-type zinc fingers span residues 723–758 (RCVT…CKKF) and 764–799 (KAAR…LLRF). Glycyl lysine isopeptide (Lys-Gly) (interchain with G-Cter in SUMO2) cross-links involve residues lysine 764, lysine 788, lysine 812, and lysine 829. Phosphoserine occurs at positions 838 and 958. Disordered regions lie at residues 983-1002 (LLKN…PYEP) and 1028-1064 (VFGE…SDNS). The segment covering 1039–1050 (PRSKKKGAKRKA) has biased composition (basic residues). Position 1064 is a phosphoserine (serine 1064). Threonine 1376 carries the post-translational modification Phosphothreonine.

As to quaternary structure, can form homodimers. May be a component of a BHC histone deacetylase complex that contains HDAC1, HDAC2, HMG20B/BRAF35, KDM1A, RCOR1/CoREST, PHF21A/BHC80, ZMYM2, ZNF217, ZMYM3, GSE1 and GTF2I. Interacts with FOXP1 and FOXP2.

The protein localises to the nucleus. In terms of biological role, involved in the negative regulation of transcription. This chain is Zinc finger MYM-type protein 2 (ZMYM2), found in Homo sapiens (Human).